Consider the following 580-residue polypeptide: MFS-type transporter thnB (580 aa).

A disordered region spans residues 1 to 33 (MSGDYSATRKSENVDTSTTASQEDSSLAPEQPE). The span at 14-25 (VDTSTTASQEDS) shows a compositional bias: polar residues. Transmembrane regions (helical) follow at residues 60 to 80 (LITL…DQTI), 92 to 112 (FHGL…LGGF), 125 to 145 (LKIS…ICGV), 157 to 177 (AIAG…LAFS), 188 to 208 (STMG…GGAF), 216 to 236 (WCFY…FLFF), and 259 to 279 (VGTV…QYAG). An N-linked (GlcNAc...) asparagine glycan is attached at Asn285. Helical transmembrane passes span 286–306 (SSVV…LAAW), 331–351 (IFQF…PIYF), 364–384 (VDNL…GAAV), 389–409 (MATP…GLLY), 421–441 (IGYQ…ALNI), 457–477 (SLYF…QAAF), and 529–549 (FAVS…MVMI).

Belongs to the major facilitator superfamily.

The protein resides in the membrane. In terms of biological role, MFS-type transporter; part of the gene cluster that produces the tetronate natural products trihazones. The polypeptide is MFS-type transporter thnB (Trichoderma harzianum (Hypocrea lixii)).